The primary structure comprises 680 residues: Cytosolic endo-beta-N-acetylglucosaminidase 1 (680 aa).

Over residues 1 to 15 (MSVAPPAPSPPPFDP) the composition is skewed to pro residues. Residues 1-21 (MSVAPPAPSPPPFDPTKPSTP) are disordered.

The protein belongs to the glycosyl hydrolase 85 family.

The protein localises to the cytoplasm. It localises to the cytosol. It catalyses the reaction an N(4)-(oligosaccharide-(1-&gt;3)-[oligosaccharide-(1-&gt;6)]-beta-D-Man-(1-&gt;4)-beta-D-GlcNAc-(1-&gt;4)-alpha-D-GlcNAc)-L-asparaginyl-[protein] + H2O = an oligosaccharide-(1-&gt;3)-[oligosaccharide-(1-&gt;6)]-beta-D-Man-(1-&gt;4)-D-GlcNAc + N(4)-(N-acetyl-beta-D-glucosaminyl)-L-asparaginyl-[protein]. Its function is as follows. Endoglycosidase that releases N-glycans from glycoproteins by cleaving the beta-1,4-glycosidic bond in the N,N'-diacetylchitobiose core. Involved in the production of high-mannose type N-glycans during plant development and fruit maturation. This Arabidopsis thaliana (Mouse-ear cress) protein is Cytosolic endo-beta-N-acetylglucosaminidase 1.